The sequence spans 276 residues: MTEIWNFINTGSKNPYYNMAMDEALLNFVSRGEIDPVIRFYTWNPATLSIGYFQRLQKEIDIDKVKEKGYGLVRRQTGGRGVLHDKELTYSVIVPESHPNMPSTVTEAYKIISQGLLEGFKNLGFETYFAIPRSKEERDKLKQPRSSVCFDAPSWYELVVEGRKIAGSAQTRQKGVILQHGSILQDIDIDDLFDMFKFKNERLKAKMKENFVQKAVAINDISNQHITLNEMENAFEAGFKKGLNIDFKPLELTEKQLEEVQELEDKYRSEAWMYRK.

Residues 32-247 enclose the BPL/LPL catalytic domain; it reads GEIDPVIRFY…GFKKGLNIDF (216 aa). The Acyl-thioester intermediate role is filled by cysteine 149.

Belongs to the octanoyltransferase LipM family. In terms of assembly, monomer.

The enzyme catalyses octanoyl-[ACP] + L-lysyl-[protein] = N(6)-octanoyl-L-lysyl-[protein] + holo-[ACP] + H(+). It functions in the pathway protein modification; protein lipoylation via endogenous pathway; protein N(6)-(lipoyl)lysine from octanoyl-[acyl-carrier-protein]. Catalyzes the transfer of endogenously produced octanoic acid from octanoyl-acyl-carrier-protein onto the lipoyl domain of GcvH, an intermediate carrier during protein lipoylation. This chain is Octanoyltransferase LipM, found in Staphylococcus epidermidis (strain ATCC 35984 / DSM 28319 / BCRC 17069 / CCUG 31568 / BM 3577 / RP62A).